We begin with the raw amino-acid sequence, 478 residues long: Lipoprotein lipase (478 aa).

The signal sequence occupies residues 1–27 (MESKALLLVALSVWLQSLIVSREGLAT). Residues 35–56 (RDFTDIESKFALRTPEDTVEDT) are interaction with GPIHBP1. Cysteine 57 and cysteine 70 are disulfide-bonded. Asparagine 73 is a glycosylation site (N-linked (GlcNAc...) asparagine). The residue at position 124 (tyrosine 124) is a 3'-nitrotyrosine. Catalysis depends on serine 162, which acts as the Nucleophile. Aspartate 186 (charge relay system) is an active-site residue. Tyrosine 194 carries the post-translational modification 3'-nitrotyrosine. Ca(2+) is bound by residues alanine 197, arginine 200, serine 202, and aspartate 205. A disulfide bond links cysteine 246 and cysteine 269. Residues 246-269 (CNIGEAIRVIAERGLGDVDQLVKC) form an essential for determining substrate specificity region. The active-site Charge relay system is histidine 271. Disulfide bonds link cysteine 294-cysteine 313 and cysteine 305-cysteine 308. One can recognise a PLAT domain in the interval 344–467 (FHYQVKMRFS…KGKSSVVFVK (124 aa)). Residue tyrosine 346 is modified to 3'-nitrotyrosine. N-linked (GlcNAc...) asparagine glycosylation is present at asparagine 389. Positions 420–424 (WSNWW) are important for interaction with lipoprotein particles. The interval 433 to 437 (KIRVK) is important for heparin binding. The interaction with GPIHBP1 stretch occupies residues 446-470 (IFCSREKKSHLQKGKSSVVFVKCHD). Cysteine 448 and cysteine 468 form a disulfide bridge.

It belongs to the AB hydrolase superfamily. Lipase family. Homodimer. Interacts with GPIHBP1 with 1:1 stoichiometry. Interacts with APOC2; the interaction activates LPL activity in the presence of lipids. Interaction with heparan sulfate proteoglycans is required to protect LPL against loss of activity. Associates with lipoprotein particles in blood plasma. Interacts with LMF1 and SEL1L; interaction with SEL1L is required to prevent aggregation of newly synthesized LPL in the endoplasmic reticulum (ER), and for normal export of LPL from the ER to the extracellular space. Interacts with SORL1; SORL1 acts as a sorting receptor, promoting LPL localization to endosomes and later to lysosomes, leading to degradation of newly synthesized LPL. In terms of processing, tyrosine nitration after lipopolysaccharide (LPS) challenge down-regulates the lipase activity.

It localises to the cell membrane. It is found in the secreted. Its subcellular location is the extracellular space. The protein localises to the extracellular matrix. It catalyses the reaction a triacylglycerol + H2O = a diacylglycerol + a fatty acid + H(+). The catalysed reaction is a 1,2-diacyl-sn-glycero-3-phosphocholine + H2O = a 2-acyl-sn-glycero-3-phosphocholine + a fatty acid + H(+). The enzyme catalyses 1,2,3-tri-(9Z-octadecenoyl)-glycerol + H2O = di-(9Z)-octadecenoylglycerol + (9Z)-octadecenoate + H(+). It carries out the reaction 1,2-di-(9Z-octadecenoyl)-sn-glycero-3-phosphocholine + H2O = (9Z-octadecenoyl)-sn-glycero-3-phosphocholine + (9Z)-octadecenoate + H(+). It catalyses the reaction 1,2,3-tributanoylglycerol + H2O = dibutanoylglycerol + butanoate + H(+). The catalysed reaction is 1,2-dihexadecanoyl-sn-glycero-3-phosphocholine + H2O = hexadecanoyl-sn-glycero-3-phosphocholine + hexadecanoate + H(+). Its activity is regulated as follows. The apolipoprotein APOC2 acts as a coactivator of LPL activity. Ca(2+) binding promotes protein stability and formation of the active homodimer. Interaction with GPIHBP1 protects LPL against inactivation by ANGPTL4. In terms of biological role, key enzyme in triglyceride metabolism. Catalyzes the hydrolysis of triglycerides from circulating chylomicrons and very low density lipoproteins (VLDL), and thereby plays an important role in lipid clearance from the blood stream, lipid utilization and storage. Although it has both phospholipase and triglyceride lipase activities it is primarily a triglyceride lipase with low but detectable phospholipase activity. Mediates margination of triglyceride-rich lipoprotein particles in capillaries. Recruited to its site of action on the luminal surface of vascular endothelium by binding to GPIHBP1 and cell surface heparan sulfate proteoglycans. The protein is Lipoprotein lipase (LPL) of Sus scrofa (Pig).